We begin with the raw amino-acid sequence, 187 residues long: Elongation factor P (187 aa).

This sequence belongs to the elongation factor P family.

The protein resides in the cytoplasm. It functions in the pathway protein biosynthesis; polypeptide chain elongation. Involved in peptide bond synthesis. Stimulates efficient translation and peptide-bond synthesis on native or reconstituted 70S ribosomes in vitro. Probably functions indirectly by altering the affinity of the ribosome for aminoacyl-tRNA, thus increasing their reactivity as acceptors for peptidyl transferase. The polypeptide is Elongation factor P (efp) (Helicobacter pylori (strain J99 / ATCC 700824) (Campylobacter pylori J99)).